We begin with the raw amino-acid sequence, 173 residues long: C-type lectin mosGCTL-7 (173 aa).

The signal sequence occupies residues 1 to 24 (MVVGWSLLGWALSWLAVATVVVSA). The 117-residue stretch at 51–167 (NWFKATEYCH…CWDEYYFVCE (117 aa)) folds into the C-type lectin domain. 2 disulfide bridges follow: Cys-59–Cys-166 and Cys-139–Cys-158. Asn-119 and Asn-144 each carry an N-linked (GlcNAc...) asparagine glycan.

In terms of assembly, interacts with putative receptor-type tyrosine-protein phosphatase mosPTP-1; the interaction may mediate the recruitment of Japanese encephalitis virus particles in complex with C-type lectin mosGCTL-7 to the cell surface.

Its subcellular location is the secreted. Functionally, carbohydrate-binding protein. In terms of biological role, (Microbial infection) Facilitates Japanese encephalitis virus infection in mosquitoes. This is C-type lectin mosGCTL-7 from Culex quinquefasciatus (Southern house mosquito).